Reading from the N-terminus, the 396-residue chain is Acetate kinase (396 aa).

Asn7 lines the Mg(2+) pocket. Lys14 contributes to the ATP binding site. Arg88 is a substrate binding site. Catalysis depends on Asp145, which acts as the Proton donor/acceptor. ATP-binding positions include 203–207 (HAGNG), 278–280 (DAR), and 326–330 (GIGEN). Glu379 is a binding site for Mg(2+).

The protein belongs to the acetokinase family. Homodimer. Requires Mg(2+) as cofactor. Mn(2+) serves as cofactor.

It is found in the cytoplasm. The enzyme catalyses acetate + ATP = acetyl phosphate + ADP. It participates in metabolic intermediate biosynthesis; acetyl-CoA biosynthesis; acetyl-CoA from acetate: step 1/2. Functionally, catalyzes the formation of acetyl phosphate from acetate and ATP. Can also catalyze the reverse reaction. The sequence is that of Acetate kinase from Phytoplasma australiense.